The chain runs to 546 residues: Oncoprotein-induced transcript 3 protein (546 aa).

The first 19 residues, 1-19 (MPLSLLLTCLSTTVTLVSP), serve as a signal peptide directing secretion. 2 N-linked (GlcNAc...) asparagine glycosylation sites follow: asparagine 89 and asparagine 116. Residues 182-222 (DENECEHNNGGCSEICVNLKNSHRCACGVGRVLRSDGKTCE) enclose the EGF-like; calcium-binding domain. Intrachain disulfides connect cysteine 186-cysteine 197, cysteine 193-cysteine 206, and cysteine 208-cysteine 221. The ZP domain maps to 261–516 (TCQVPVLCKS…SRCAQGCHRR (256 aa)). Asparagine 299 is a glycosylation site (N-linked (GlcNAc...) asparagine).

Liver-specific. Expressed only in the hepatocytes.

Its subcellular location is the nucleus envelope. Its function is as follows. May be involved in hepatocellular function and development. This chain is Oncoprotein-induced transcript 3 protein (Oit3), found in Mus musculus (Mouse).